The primary structure comprises 379 residues: Cytochrome b (379 aa).

The next 4 membrane-spanning stretches (helical) occupy residues 33–53, 77–98, 113–133, and 178–198; these read FGSL…FLAM, WLIR…FIHV, WNIG…GYVL, and FFAF…VHLL. 2 residues coordinate heme b: His-83 and His-97. Heme b contacts are provided by His-182 and His-196. His-201 contacts a ubiquinone. 4 helical membrane-spanning segments follow: residues 226-246, 288-308, 320-340, and 347-367; these read TKDL…ALFF, LGGV…PLLN, ITQV…WIGG, and FTMI…ILIP.

Belongs to the cytochrome b family. In terms of assembly, the cytochrome bc1 complex contains 11 subunits: 3 respiratory subunits (MT-CYB, CYC1 and UQCRFS1), 2 core proteins (UQCRC1 and UQCRC2) and 6 low-molecular weight proteins (UQCRH/QCR6, UQCRB/QCR7, UQCRQ/QCR8, UQCR10/QCR9, UQCR11/QCR10 and a cleavage product of UQCRFS1). This cytochrome bc1 complex then forms a dimer. The cofactor is heme b.

The protein resides in the mitochondrion inner membrane. Functionally, component of the ubiquinol-cytochrome c reductase complex (complex III or cytochrome b-c1 complex) that is part of the mitochondrial respiratory chain. The b-c1 complex mediates electron transfer from ubiquinol to cytochrome c. Contributes to the generation of a proton gradient across the mitochondrial membrane that is then used for ATP synthesis. In Akodon spegazzinii (Spegazzini's grass mouse), this protein is Cytochrome b (MT-CYB).